Here is a 274-residue protein sequence, read N- to C-terminus: NH(3)-dependent NAD(+) synthetase (274 aa).

Glycine 46–serine 53 contributes to the ATP binding site. Aspartate 52 lines the Mg(2+) pocket. Residue arginine 140 participates in deamido-NAD(+) binding. Threonine 160 serves as a coordination point for ATP. A Mg(2+)-binding site is contributed by glutamate 165. Deamido-NAD(+) is bound by residues lysine 173 and aspartate 180. Positions 189 and 211 each coordinate ATP. Histidine 260–lysine 261 contributes to the deamido-NAD(+) binding site.

The protein belongs to the NAD synthetase family. In terms of assembly, homodimer.

The catalysed reaction is deamido-NAD(+) + NH4(+) + ATP = AMP + diphosphate + NAD(+) + H(+). The protein operates within cofactor biosynthesis; NAD(+) biosynthesis; NAD(+) from deamido-NAD(+) (ammonia route): step 1/1. Functionally, catalyzes the ATP-dependent amidation of deamido-NAD to form NAD. Uses ammonia as a nitrogen source. This is NH(3)-dependent NAD(+) synthetase from Streptococcus gordonii (strain Challis / ATCC 35105 / BCRC 15272 / CH1 / DL1 / V288).